The primary structure comprises 467 residues: Cysteine--tRNA ligase (467 aa).

Position 29 (cysteine 29) interacts with Zn(2+). The 'HIGH' region signature appears at 31 to 41 (PTVYNYVHIGN). Zn(2+)-binding residues include cysteine 209, histidine 234, and glutamate 238. Residues 267–271 (KMSKS) carry the 'KMSKS' region motif. Lysine 270 is an ATP binding site.

This sequence belongs to the class-I aminoacyl-tRNA synthetase family. As to quaternary structure, monomer. Zn(2+) is required as a cofactor.

The protein resides in the cytoplasm. The catalysed reaction is tRNA(Cys) + L-cysteine + ATP = L-cysteinyl-tRNA(Cys) + AMP + diphosphate. The polypeptide is Cysteine--tRNA ligase (Xylella fastidiosa (strain Temecula1 / ATCC 700964)).